A 47-amino-acid chain; its full sequence is Photosystem II reaction center protein K (47 aa).

Positions 1–10 are excised as a propeptide; sequence MALINFDLLA. A helical transmembrane segment spans residues 26 to 46; the sequence is LPLIPLFFFLLVFVWQAAVGF.

The protein belongs to the PsbK family. As to quaternary structure, PSII is composed of 1 copy each of membrane proteins PsbA, PsbB, PsbC, PsbD, PsbE, PsbF, PsbH, PsbI, PsbJ, PsbK, PsbL, PsbM, PsbT, PsbX, PsbY, Psb30/Ycf12, peripheral proteins PsbO, CyanoQ (PsbQ), PsbU, PsbV and a large number of cofactors. It forms dimeric complexes.

It is found in the cellular thylakoid membrane. One of the components of the core complex of photosystem II (PSII). PSII is a light-driven water:plastoquinone oxidoreductase that uses light energy to abstract electrons from H(2)O, generating O(2) and a proton gradient subsequently used for ATP formation. It consists of a core antenna complex that captures photons, and an electron transfer chain that converts photonic excitation into a charge separation. This Prochlorococcus marinus (strain NATL1A) protein is Photosystem II reaction center protein K.